Here is a 367-residue protein sequence, read N- to C-terminus: Peptide chain release factor 1 (367 aa).

Gln-243 bears the N5-methylglutamine mark.

It belongs to the prokaryotic/mitochondrial release factor family. In terms of processing, methylated by PrmC. Methylation increases the termination efficiency of RF1.

The protein localises to the cytoplasm. Its function is as follows. Peptide chain release factor 1 directs the termination of translation in response to the peptide chain termination codons UAG and UAA. This Acidovorax ebreus (strain TPSY) (Diaphorobacter sp. (strain TPSY)) protein is Peptide chain release factor 1.